We begin with the raw amino-acid sequence, 88 residues long: Small ribosomal subunit protein uS17 (88 aa).

Belongs to the universal ribosomal protein uS17 family. As to quaternary structure, part of the 30S ribosomal subunit.

Its function is as follows. One of the primary rRNA binding proteins, it binds specifically to the 5'-end of 16S ribosomal RNA. The protein is Small ribosomal subunit protein uS17 of Syntrophotalea carbinolica (strain DSM 2380 / NBRC 103641 / GraBd1) (Pelobacter carbinolicus).